The sequence spans 428 residues: C4-dicarboxylate transport protein (428 aa).

Transmembrane regions (helical) follow at residues 8–28 (SLYV…HFYP), 44–64 (LIKM…IAGM), 76–96 (VALL…LIIV), 142–162 (IGAF…LFGF), 184–204 (VIFG…FGAM), 222–242 (LIIC…GSIA), 289–309 (VVGL…SIYL), 326–346 (IFHQ…AAGV), and 352–372 (IVLA…LALI).

It belongs to the dicarboxylate/amino acid:cation symporter (DAACS) (TC 2.A.23) family.

The protein resides in the cell inner membrane. Functionally, responsible for the transport of dicarboxylates such as succinate, fumarate, and malate from the periplasm across the membrane. This is C4-dicarboxylate transport protein from Klebsiella pneumoniae (strain 342).